We begin with the raw amino-acid sequence, 470 residues long: E3 SUMO-protein ligase EGR2 (470 aa).

Low complexity predominate over residues 126-141; it reads PPASTTASSSVTSASP. Disordered regions lie at residues 126 to 153, 159 to 178, and 185 to 210; these read PPAS…GVCT, PELD…SGCT, and PSAF…SYPS. Over residues 190–202 the composition is skewed to low complexity; it reads SPPSTTSTSSLAY. Lysine 247 bears the N6-acetyllysine; by EP300 mark. The segment covering 275–291 has biased composition (gly residues); that stretch reads GPGAGVTGPGASGGGEG. The interval 275-345 is disordered; it reads GPGAGVTGPG…PYPCPAEGCD (71 aa). 3 consecutive C2H2-type zinc fingers follow at residues 337 to 361, 367 to 389, and 395 to 417; these read YPCP…IRIH, FQCR…IRTH, and FACD…TKIH. The tract at residues 408–470 is disordered; sequence DERKRHTKIH…ASCTSRTRTP (63 aa). Basic residues predominate over residues 412 to 422; that stretch reads RHTKIHLRQKE. Residues 426–439 show a composition bias toward low complexity; it reads SAPSAPPSAQSSAS. Over residues 440–450 the composition is skewed to gly residues; the sequence is GPGGSQAGGSL.

The protein belongs to the EGR C2H2-type zinc-finger protein family. Interacts with HCFC1. Interacts with WWP2. Interacts with UBC9. Interacts with CITED1. Interacts (via phosphorylated form) with SFN. In terms of processing, ubiquitinated by WWP2 leading to proteasomal degradation. Acetylated at Lys-247. May be deacetylated by HDAC6, HDAC10 or SIRT1. As to expression, expressed mainly in the thymus.

The protein resides in the nucleus. It participates in protein modification; protein sumoylation. Functionally, sequence-specific DNA-binding transcription factor. Plays a role in hindbrain segmentation by regulating the expression of a subset of homeobox containing genes and in Schwann cell myelination by regulating the expression of genes involved in the formation and maintenance of myelin. Binds to two EGR2-consensus sites EGR2A (5'-CTGTAGGAG-3') and EGR2B (5'-ATGTAGGTG-3') in the HOXB3 enhancer and promotes HOXB3 transcriptional activation. Binds to specific DNA sites located in the promoter region of HOXA4, HOXB2 and ERBB2. Regulates hindbrain segmentation by controlling the expression of Hox genes, such as HOXA4, HOXB3 and HOXB2, and thereby specifying odd and even rhombomeres. Promotes the expression of HOXB3 in the rhombomere r5 and of HOXB3 in r3 and r5 in the hindbrain. Regulates myelination in the peripheral nervous system after birth, possibly by regulating the expression of myelin proteins, such as MPZ, and by promoting the differentiation of Schwann cells. Involved in the development of the jaw openener musculature, probably by playing a role in its innervation through trigeminal motor neurons. May play a role in adipogenesis, possibly by regulating the expression of CEBPB. In terms of biological role, E3 SUMO-protein ligase helping SUMO1 conjugation to its coregulators NAB1 and NAB2, whose sumoylation down-regulates EGR2 transcriptional activity. This is E3 SUMO-protein ligase EGR2 (Egr2) from Mus musculus (Mouse).